A 272-amino-acid polypeptide reads, in one-letter code: Ras-related protein RSR1 (272 aa).

Position 10–17 (10–17) interacts with GTP; the sequence is GAGGVGKS. The Effector region motif lies at 32-40; it reads YDPTIEDSY. GTP is bound by residues 57-61 and 116-119; these read DTAGI and NKAD. Residues 177 to 272 form a disordered region; it reads DARNQSQQFS…KKNASTCTIL (96 aa). 2 stretches are compositionally biased toward polar residues: residues 180–232 and 245–258; these read NQSQ…STPV and SGSSNRTGISATSQ. Cys269 carries the post-translational modification Cysteine methyl ester. Cys269 carries S-geranylgeranyl cysteine lipidation. A propeptide spans 270-272 (removed in mature form); the sequence is TIL.

The protein belongs to the small GTPase superfamily. Ras family.

Its subcellular location is the cell membrane. It catalyses the reaction GTP + H2O = GDP + phosphate + H(+). With respect to regulation, alternates between an inactive form bound to GDP and an active form bound to GTP. Activated by a guanine nucleotide-exchange factor (GEF) and inactivated by a GTPase-activating protein (GAP). Ras-related protein which binds GDP/GTP and possesses intrinsic GTPase activity. Involved in development of cell polarity during the cell division cycle, and essential for bud emergence. The protein is Ras-related protein RSR1 of Saccharomyces cerevisiae (strain ATCC 204508 / S288c) (Baker's yeast).